The following is a 391-amino-acid chain: Choline/ethanolaminephosphotransferase 1 (391 aa).

At 1 to 49 (MGYFVPDSHIENLKSYKYQSEDRSLVSKYFLKPFWQRFCHIFPTWMAPN) the chain is on the lumenal side. A helical transmembrane segment spans residues 50–69 (IITLSGFAFIVINVLTVFYY). Topologically, residues 70-172 (DPNLNTDTPR…YHTHTLYLSE (103 aa)) are cytoplasmic. The chain crosses the membrane as a helical span at residues 173 to 193 (FSGPVEGILIVCVSLILTGIY). Topologically, residues 194–211 (GKQVIWHTYLFTITVGDK) are lumenal. The helical transmembrane segment at 212–232 (VIDVDTLDIVFSLAVFGLVMN) threads the bilayer. Residues 233–264 (ALSAKRNVDKYYRNSTSSANNITQIEQDSAIK) lie on the Cytoplasmic side of the membrane. Residues 265-282 (GLLPFFAYYASIALLVWM) traverse the membrane as a helical segment. Residues 283–285 (QPS) are Lumenal-facing. A helical membrane pass occupies residues 286 to 308 (FITLSFILSVGFTGAFTVGRIIV). At 309–321 (CHLTKQSFPMFNA) the chain is on the cytoplasmic side. A helical membrane pass occupies residues 322 to 342 (PMLIPLCQIVLYKICLSLWGI). At 343 to 346 (ESNK) the chain is on the lumenal side. Residues 347 to 367 (IVFALSWLGFGLSLGVHIMFM) traverse the membrane as a helical segment. Over 368-391 (NDIIHEFTEYLDVYALSIKRSKLT) the chain is Cytoplasmic.

This sequence belongs to the CDP-alcohol phosphatidyltransferase class-I family. The cofactor is Mg(2+).

It is found in the golgi apparatus membrane. It carries out the reaction CDP-ethanolamine + a 1,2-diacyl-sn-glycerol = a 1,2-diacyl-sn-glycero-3-phosphoethanolamine + CMP + H(+). The enzyme catalyses CDP-choline + a 1,2-diacyl-sn-glycerol = a 1,2-diacyl-sn-glycero-3-phosphocholine + CMP + H(+). It catalyses the reaction CDP-N-methylethanolamine + a 1,2-diacyl-sn-glycerol = a 1,2-diacyl-sn-glycero-3-phospho-N-methylethanolamine + CMP + H(+). The catalysed reaction is CDP-N,N-dimethylethanolamine + a 1,2-diacyl-sn-glycerol = a 1,2-diacyl-sn-glycero-3-phospho-N,N-dimethylethanolamine + CMP + H(+). It carries out the reaction 1,2-di-(9Z-octadecenoyl)-glycerol + CDP-choline = 1,2-di-(9Z-octadecenoyl)-sn-glycero-3-phosphocholine + CMP + H(+). The enzyme catalyses 1,2-di-(9Z-octadecenoyl)-glycerol + CDP-ethanolamine = 1,2-di-(9Z-octadecenoyl)-sn-glycero-3-phosphoethanolamine + CMP + H(+). Its pathway is phospholipid metabolism; phosphatidylethanolamine biosynthesis; phosphatidylethanolamine from ethanolamine: step 3/3. It functions in the pathway phospholipid metabolism; phosphatidylcholine biosynthesis; phosphatidylcholine from phosphocholine: step 2/2. Requires a divalent cation activator, and is inhibited by CMP. Activated by phospholipids, especially phosphatidylcholine. In terms of biological role, catalyzes the final step in the CDP-ethanolamine route leading to phosphatidylethanolamine (PE). Can also catalyze the formation of phosphatidylcholine (PC) from CDP-choline, but does not substantially contribute to PC biosynthesis. Preferentially uses CDP-dimethylethanolamine and CDP-propanolamine as aminoalcohol substrates. Shows highest activity toward di-unsaturated diacylglycerol species as lipid substrates. The CDP-ethanolamine pathway may play a role in maintaining the proper PE species distribution. The protein is Choline/ethanolaminephosphotransferase 1 (EPT1) of Saccharomyces cerevisiae (strain ATCC 204508 / S288c) (Baker's yeast).